The primary structure comprises 791 residues: Protein FAM47A (791 aa).

Disordered regions lie at residues Pro-195–Arg-257, Glu-274–Cys-409, and Val-449–Pro-573. Composition is skewed to basic and acidic residues over residues Glu-274 to Asp-288 and Gly-333 to Ser-342. A compositionally biased stretch (polar residues) spans Ser-349 to Gly-358. Basic and acidic residues predominate over residues Val-449–Pro-462.

Belongs to the FAM47 family.

In Homo sapiens (Human), this protein is Protein FAM47A (FAM47A).